The following is a 452-amino-acid chain: Trigger factor (452 aa).

The region spanning 171–256 (GDRVKVNFKG…ATAIETPEEK (86 aa)) is the PPIase FKBP-type domain.

It belongs to the FKBP-type PPIase family. Tig subfamily.

It localises to the cytoplasm. The enzyme catalyses [protein]-peptidylproline (omega=180) = [protein]-peptidylproline (omega=0). Functionally, involved in protein export. Acts as a chaperone by maintaining the newly synthesized protein in an open conformation. Functions as a peptidyl-prolyl cis-trans isomerase. This is Trigger factor from Bradyrhizobium sp. (strain BTAi1 / ATCC BAA-1182).